Consider the following 101-residue polypeptide: Small ribosomal subunit protein uS14 (101 aa).

This sequence belongs to the universal ribosomal protein uS14 family. As to quaternary structure, part of the 30S ribosomal subunit. Contacts proteins S3 and S10.

Functionally, binds 16S rRNA, required for the assembly of 30S particles and may also be responsible for determining the conformation of the 16S rRNA at the A site. This chain is Small ribosomal subunit protein uS14, found in Acinetobacter baumannii (strain AB307-0294).